The following is a 969-amino-acid chain: Aspartic protease 5 (969 aa).

An N-terminal signal peptide occupies residues 1-22; sequence MEAGAMGGSSFLSFSSGPSAET. Residues 1–45 show a composition bias toward low complexity; that stretch reads MEAGAMGGSSFLSFSSGPSAETSPSSLSPPTSSSPSPSPQLVSDS. Disordered stretches follow at residues 1 to 65, 79 to 104, 128 to 149, 173 to 193, and 311 to 382; these read MEAG…SSRT, ENEA…AGHL, SSAT…RSSS, SSSS…SACG, and FLSL…DLPR. Residues 23–820 are Lumenal-facing; the sequence is SPSSLSPPTS…PEGLPLSPQQ (798 aa). Residues 311 to 324 show a composition bias toward low complexity; sequence FLSLSSSPRSLASD. A compositionally biased stretch (basic and acidic residues) spans 335–355; the sequence is QSREQRGEREGERQRPDKGEE. The Peptidase A1 domain maps to 413-758; that stretch reads YFLDILVGTP…DREQDRVGFA (346 aa). Asp431 is an active-site residue. The segment at 608–635 is disordered; that stretch reads PPESESTPATEALRPVAGESASRRISEK. Asp682 is a catalytic residue. Residues 768-794 are disordered; that stretch reads DQRPRGPDSGDGPKGRPTAPFTVPPLR. A compositionally biased stretch (basic and acidic residues) spans 769-781; it reads QRPRGPDSGDGPK. A helical transmembrane segment spans residues 821-841; sequence LWVAAALVVVAILIAVTVILL. The Cytoplasmic portion of the chain corresponds to 842-969; the sequence is HTIKRPSRSS…TLLDLPLGGE (128 aa). The segment at 922-969 is disordered; it reads EDDGDFFGDDSVPSAEEQETAPSLSLREESSPFSASQSTLLDLPLGGE. A compositionally biased stretch (polar residues) spans 952–961; that stretch reads SPFSASQSTL.

This sequence belongs to the peptidase A1 family. Post-translationally, may be auto-cleaved to produce a 55 kDa form.

It is found in the golgi apparatus membrane. Functionally, in tachyzoites, plays an essential role in the export of several dense granule proteins into the host cell by cleaving the localization motif RRLxx (termed Toxoplasma export element (TEXEL)) located downstream of the N-terminal secretory signal sequence. However, can also regulate the export of proteins that lack the TEXEL motif, such as GRA24. Requires Arg at P3 and P2, and Leu at P1 in the substrate TEXEL motif and, specifically, cleaves after Leu. Cleaves GRA16; proteolytic cleavage is essential for the correct trafficking of GRA16 from the parasite into the infected host nucleus. Cleaves GRA19 and GRA20. Cleaves MYR1. Cleaves LCAT, GRA44, GRA46, GRA46, ROP35/WNG1 and ROP34/WNG2. By regulating the export of dense granule proteins into the host cell, regulates multiple processes during tachyzoite infection of host cells, including recruitment of host mitochondria to the parasitophorous vacuole (PV), formation of the nanotubular network (NTN) or intravacuolar network (IVN) which are membranous tubules that bud from the PV membrane into the vacuolar lumen and, up-regulation of host cell genes to facilitate the parasite infection and modulate the host innate immune response. At the bradyzoite stage, also involved in the formation of the cyst wall. This chain is Aspartic protease 5, found in Toxoplasma gondii.